The chain runs to 33 residues: Brevinin-2DYd (33 aa).

Residues C27 and C33 are joined by a disulfide bond.

Expressed by the skin glands.

It is found in the secreted. Functionally, antimicrobial peptide. A mixture of Brevinin-2DYc/2DYd is active against the Gram-positive bacterium S.aureus (MIC=15 uM) and the Gram-negative bacterium E.coli (MIC=15 uM). The protein is Brevinin-2DYd of Rana dybowskii (Dybovsky's frog).